The sequence spans 84 residues: Sulfur carrier protein TusA (84 aa).

The Cysteine persulfide intermediate role is filled by C19.

The protein belongs to the sulfur carrier protein TusA family. In terms of assembly, interacts with IscS.

It is found in the cytoplasm. It functions in the pathway tRNA modification. Its function is as follows. Sulfur carrier protein involved in sulfur trafficking in the cell. Part of a sulfur-relay system required for 2-thiolation during synthesis of 2-thiouridine of the modified wobble base 5-methylaminomethyl-2-thiouridine (mnm(5)s(2)U) in tRNA. Interacts with IscS and stimulates its cysteine desulfurase activity. Accepts an activated sulfur from IscS, which is then transferred to TusD, and thus determines the direction of sulfur flow from IscS to 2-thiouridine formation. Also appears to be involved in sulfur transfer for the biosynthesis of molybdopterin. The chain is Sulfur carrier protein TusA from Yersinia pseudotuberculosis serotype O:1b (strain IP 31758).